A 664-amino-acid polypeptide reads, in one-letter code: Protein-arginine deiminase type-3 (664 aa).

It belongs to the protein arginine deiminase family. Ca(2+) serves as cofactor. As to expression, epidermis and hair follicles.

The protein localises to the cytoplasm. It catalyses the reaction L-arginyl-[protein] + H2O = L-citrullyl-[protein] + NH4(+). Its function is as follows. Catalyzes the deimination of arginine residues of proteins. This chain is Protein-arginine deiminase type-3 (Padi3), found in Rattus norvegicus (Rat).